A 187-amino-acid polypeptide reads, in one-letter code: Ribosome-recycling factor (187 aa).

Belongs to the RRF family.

It localises to the cytoplasm. Functionally, responsible for the release of ribosomes from messenger RNA at the termination of protein biosynthesis. May increase the efficiency of translation by recycling ribosomes from one round of translation to another. This chain is Ribosome-recycling factor, found in Rhodopseudomonas palustris (strain HaA2).